Consider the following 263-residue polypeptide: Ribosomal RNA small subunit methyltransferase A (263 aa).

N20, L22, G47, E68, D90, and N110 together coordinate S-adenosyl-L-methionine.

It belongs to the class I-like SAM-binding methyltransferase superfamily. rRNA adenine N(6)-methyltransferase family. RsmA subfamily.

It localises to the cytoplasm. It catalyses the reaction adenosine(1518)/adenosine(1519) in 16S rRNA + 4 S-adenosyl-L-methionine = N(6)-dimethyladenosine(1518)/N(6)-dimethyladenosine(1519) in 16S rRNA + 4 S-adenosyl-L-homocysteine + 4 H(+). Specifically dimethylates two adjacent adenosines (A1518 and A1519) in the loop of a conserved hairpin near the 3'-end of 16S rRNA in the 30S particle. May play a critical role in biogenesis of 30S subunits. The sequence is that of Ribosomal RNA small subunit methyltransferase A from Chlorobium limicola (strain DSM 245 / NBRC 103803 / 6330).